We begin with the raw amino-acid sequence, 152 residues long: Kininogen-1c (152 aa).

Positions 1-23 are cleaved as a signal peptide; the sequence is MRLWFCLSLFIVLCLEHFPGTLA. Basic and acidic residues predominate over residues 28–44; that stretch reads VPESEEKTEQFLRDLPK. The interval 28–152 is disordered; it reads VPESEEKTEQ…RGKFHSQSHV (125 aa).

The protein belongs to the bradykinin-related peptide family. Expressed by the skin glands.

Its subcellular location is the secreted. In terms of biological role, potent vasodilator. Binds B1 (BDKRB1) and B2 (BDKRB2) bradykinin receptors. The sequence is that of Kininogen-1c from Bombina maxima (Giant fire-bellied toad).